Here is a 283-residue protein sequence, read N- to C-terminus: Undecaprenyl-diphosphatase (283 aa).

A run of 7 helical transmembrane segments spans residues 46–66 (PGVS…IAYF), 95–115 (VAMV…KFFW), 127–147 (VPSI…AECM), 154–174 (LGGV…LAVI), 200–220 (FSFL…LKSA), 227–247 (AGPL…WLAI), and 259–279 (TWIF…WWAF).

It belongs to the UppP family.

The protein resides in the cell inner membrane. It carries out the reaction di-trans,octa-cis-undecaprenyl diphosphate + H2O = di-trans,octa-cis-undecaprenyl phosphate + phosphate + H(+). Its function is as follows. Catalyzes the dephosphorylation of undecaprenyl diphosphate (UPP). Confers resistance to bacitracin. The polypeptide is Undecaprenyl-diphosphatase (Synechococcus sp. (strain CC9902)).